A 332-amino-acid polypeptide reads, in one-letter code: Transcription regulatory protein SNF6 (332 aa).

The Nuclear localization signal motif lies at 2–8; sequence GVIKKKR. Residue Thr-165 is modified to Phosphothreonine. A disordered region spans residues 278–299; sequence VTTVASQSPHATATEKEPVPAV.

Component of the SWI/SNF global transcription activator complex. The 1.14 MDa SWI/SNF complex is composed of 11 different subunits: one copy each of SWI1, SNF2/SWI2, SNF5, SNF12/SWP73, ARP7/SWP61, ARP9/SWP59; two copies each of SWI3, SNF6, SNF11, SWP82; and three copies of TAF14/SWP29.

It localises to the nucleus. Involved in transcriptional activation. Component of the SWI/SNF complex, an ATP-dependent chromatin remodeling complex, which is required for the positive and negative regulation of gene expression of a large number of genes. It changes chromatin structure by altering DNA-histone contacts within a nucleosome, leading eventually to a change in nucleosome position, thus facilitating or repressing binding of gene-specific transcription factors. In Saccharomyces cerevisiae (strain ATCC 204508 / S288c) (Baker's yeast), this protein is Transcription regulatory protein SNF6 (SNF6).